A 196-amino-acid chain; its full sequence is Peroxisome assembly protein 22 (196 aa).

Residues 15-37 (LWIAALVAASIVTISYKVYSSYI) form a helical membrane-spanning segment.

This sequence belongs to the peroxin-22 family.

It is found in the peroxisome membrane. Functionally, involved in peroxisome biogenesis. The chain is Peroxisome assembly protein 22 (PEX22) from Debaryomyces hansenii (strain ATCC 36239 / CBS 767 / BCRC 21394 / JCM 1990 / NBRC 0083 / IGC 2968) (Yeast).